A 620-amino-acid chain; its full sequence is Long-chain fatty acid transport protein 2 (620 aa).

At 1 to 4 (MLSA) the chain is on the lumenal side. The helical transmembrane segment at 5–27 (IYTVLAGLLFLPLLVNLCCPYFF) threads the bilayer. The Cytoplasmic segment spans residues 28-106 (QDIGYFLKVA…DHLGLRQGDC (79 aa)). Residues 107 to 127 (VALLMGNEPAYVWLWLGLVKL) traverse the membrane as a helical segment. Residues 128 to 261 (GCAMACLNYN…SGLKADDVIY (134 aa)) lie on the Lumenal side of the membrane. Residue 222–233 (YIYTSGTTGLPK) coordinates AMP. A helical transmembrane segment spans residues 262-282 (ITLPFYHSAALLIGIHGCIVA). The Cytoplasmic portion of the chain corresponds to 283–620 (GATLALRTKF…NAISAKTLKL (338 aa)). An N6-acetyllysine modification is found at K291. T577 bears the Phosphothreonine mark.

It belongs to the ATP-dependent AMP-binding enzyme family. As to expression, expressed in liver, kidney, placenta, intestine, brain, heart, and colon. Predominantly expressed in liver. In terms of tissue distribution, expressed in liver, placenta, and intestine, but much lower relative to isoform 1.

Its subcellular location is the endoplasmic reticulum membrane. It is found in the peroxisome membrane. The protein localises to the cell membrane. It localises to the microsome. It catalyses the reaction a fatty acid(in) = a fatty acid(out). The catalysed reaction is (9Z)-octadecenoate(out) = (9Z)-octadecenoate(in). It carries out the reaction a long-chain fatty acid + ATP + CoA = a long-chain fatty acyl-CoA + AMP + diphosphate. The enzyme catalyses (5Z,8Z,11Z,14Z)-eicosatetraenoate + ATP + CoA = (5Z,8Z,11Z,14Z)-eicosatetraenoyl-CoA + AMP + diphosphate. It catalyses the reaction hexadecanoate + ATP + CoA = hexadecanoyl-CoA + AMP + diphosphate. The catalysed reaction is (9Z)-octadecenoate + ATP + CoA = (9Z)-octadecenoyl-CoA + AMP + diphosphate. It carries out the reaction 3,7,11,15-tetramethylhexadecanoate + ATP + CoA = phytanoyl-CoA + AMP + diphosphate. The enzyme catalyses (9Z,12Z,15Z)-octadecatrienoate + ATP + CoA = (9Z,12Z,15Z)-octadecatrienoyl-CoA + AMP + diphosphate. It catalyses the reaction 2,6,10,14-tetramethylpentadecanoate + ATP + CoA = pristanoyl-CoA + AMP + diphosphate. The catalysed reaction is (E)-hexadec-2-enoate + ATP + CoA = (2E)-hexadecenoyl-CoA + AMP + diphosphate. It carries out the reaction a very long-chain fatty acid + ATP + CoA = a very long-chain fatty acyl-CoA + AMP + diphosphate. The enzyme catalyses tetracosanoate + ATP + CoA = tetracosanoyl-CoA + AMP + diphosphate. It catalyses the reaction (4Z,7Z,10Z,13Z,16Z,19Z)-docosahexaenoate + ATP + CoA = (4Z,7Z,10Z,13Z,16Z,19Z)-docosahexaenoyl-CoA + AMP + diphosphate. The catalysed reaction is (25R)-3alpha,7alpha,12alpha-trihydroxy-5beta-cholestan-26-oate + ATP + CoA = (25R)-3alpha,7alpha,12alpha-trihydroxy-5beta-cholestan-26-oyl-CoA + AMP + diphosphate. Its function is as follows. Mediates the import of long-chain fatty acids (LCFA) into the cell by facilitating their transport across cell membranes, playing an important role in hepatic fatty acid uptake. Also functions as an acyl-CoA ligase catalyzing the ATP-dependent formation of fatty acyl-CoA using LCFA and very-long-chain fatty acids (VLCFA) as substrates, which prevents fatty acid efflux from cells and might drive more fatty acid uptake. Plays a pivotal role in regulating available LCFA substrates from exogenous sources in tissues undergoing high levels of beta-oxidation or triglyceride synthesis. Can also activate branched-chain fatty acids such as phytanic acid and pristanic acid. May contribute to the synthesis of sphingosine-1-phosphate. Does not activate C24 bile acids, cholate and chenodeoxycholate. In vitro, activates 3-alpha,7-alpha,12-alpha-trihydroxy-5-beta-cholestanate (THCA), the C27 precursor of cholic acid deriving from the de novo synthesis from cholesterol. However, it is not critical for THCA activation and bile synthesis in vivo. Functionally, exhibits both long-chain fatty acids (LCFA) transport activity and acyl CoA synthetase towards very long-chain fatty acids. Shows a preference for generating CoA derivatives of n-3 fatty acids, which are preferentially trafficked into phosphatidylinositol. In terms of biological role, exhibits long-chain fatty acids (LCFA) transport activity but lacks acyl CoA synthetase towards very long-chain fatty acids. The sequence is that of Long-chain fatty acid transport protein 2 (SLC27A2) from Homo sapiens (Human).